The chain runs to 250 residues: Indole-3-glycerol phosphate synthase (250 aa).

This sequence belongs to the TrpC family.

The enzyme catalyses 1-(2-carboxyphenylamino)-1-deoxy-D-ribulose 5-phosphate + H(+) = (1S,2R)-1-C-(indol-3-yl)glycerol 3-phosphate + CO2 + H2O. It participates in amino-acid biosynthesis; L-tryptophan biosynthesis; L-tryptophan from chorismate: step 4/5. The protein is Indole-3-glycerol phosphate synthase of Metallosphaera sedula (strain ATCC 51363 / DSM 5348 / JCM 9185 / NBRC 15509 / TH2).